The primary structure comprises 432 residues: Protein prenyltransferase alpha subunit repeat-containing protein 1-A (432 aa).

PFTA repeat units follow at residues 86–119 (ELIDVTCTLLLLNPDFTTAWNVRKELIQSGTLNP), 121–154 (KDLQLGKLALTKFPKSPETWIHRRWALQRLVQEL), 179–212 (EEMHVCCEAAGRYPSNYNSWSHRIWVVQHLGNLK), 218–251 (DELSSTKHWVSMHVSDHSGFHYRQFLLKSLLSKT), 294–327 (EEMDLNRELVDSFPGHETLWCHRRQIFNLIHQLL), and 395–432 (SFDSELRFINCVLTNCCSPEQSRFAASYRKWLLSLQGH).

Belongs to the protein prenyltransferase subunit alpha family.

This chain is Protein prenyltransferase alpha subunit repeat-containing protein 1-A (ptar1-a), found in Xenopus laevis (African clawed frog).